A 319-amino-acid chain; its full sequence is 2-dehydropantoate 2-reductase (319 aa).

NADP(+)-binding positions include 10–15 (GTGALG) and N105. Position 105 (N105) interacts with substrate. K192 acts as the Proton donor in catalysis. Residues N196, N200, and S262 each coordinate substrate. E274 lines the NADP(+) pocket.

Belongs to the ketopantoate reductase family.

Its subcellular location is the cytoplasm. The catalysed reaction is (R)-pantoate + NADP(+) = 2-dehydropantoate + NADPH + H(+). The protein operates within cofactor biosynthesis; (R)-pantothenate biosynthesis; (R)-pantoate from 3-methyl-2-oxobutanoate: step 2/2. Catalyzes the NADPH-dependent reduction of ketopantoate into pantoic acid. This is 2-dehydropantoate 2-reductase from Nostoc sp. (strain PCC 7120 / SAG 25.82 / UTEX 2576).